A 518-amino-acid chain; its full sequence is Chromosomal replication initiator protein DnaA (518 aa).

Residues 1–72 (MTLAEFWPLC…VREELAAGRS (72 aa)) form a domain I, interacts with DnaA modulators region. The tract at residues 72–180 (SAFVFKPGEG…DAEEARYEQT (109 aa)) is domain II. The segment at 145-178 (EPRQAAGSASRPESAAVAKARTDAQRDAEEARYE) is disordered. A compositionally biased stretch (basic and acidic residues) spans 164-177 (ARTDAQRDAEEARY). The segment at 181-397 (NLSPDYTFDT…GAFNRVGASS (217 aa)) is domain III, AAA+ region. ATP is bound by residues Gly225, Gly227, Lys228, and Thr229. The segment at 398 to 518 (RFMNRPVIDI…YEKLLILIQN (121 aa)) is domain IV, binds dsDNA.

It belongs to the DnaA family. Oligomerizes as a right-handed, spiral filament on DNA at oriC.

It localises to the cytoplasm. In terms of biological role, plays an essential role in the initiation and regulation of chromosomal replication. ATP-DnaA binds to the origin of replication (oriC) to initiate formation of the DNA replication initiation complex once per cell cycle. Binds the DnaA box (a 9 base pair repeat at the origin) and separates the double-stranded (ds)DNA. Forms a right-handed helical filament on oriC DNA; dsDNA binds to the exterior of the filament while single-stranded (ss)DNA is stabiized in the filament's interior. The ATP-DnaA-oriC complex binds and stabilizes one strand of the AT-rich DNA unwinding element (DUE), permitting loading of DNA polymerase. After initiation quickly degrades to an ADP-DnaA complex that is not apt for DNA replication. Binds acidic phospholipids. In Neisseria meningitidis serogroup A / serotype 4A (strain DSM 15465 / Z2491), this protein is Chromosomal replication initiator protein DnaA.